We begin with the raw amino-acid sequence, 360 residues long: Photosystem II protein D1 2 (360 aa).

Transmembrane regions (helical) follow at residues 29-46 (YIGWFGVLMIPTLLAATT), 118-133 (HFLTGVFCYLGREWEL), and 142-156 (WICLAFSAPVAAATA). Histidine 118 contacts chlorophyll a. Tyrosine 126 is a pheophytin a binding site. [CaMn4O5] cluster-binding residues include aspartate 170 and glutamate 189. A helical transmembrane segment spans residues 197 to 218 (FHMLGVAGVFGGSLFSAMHGSL). Histidine 198 is a chlorophyll a binding site. A quinone-binding positions include histidine 215 and 264-265 (SF). Histidine 215 contributes to the Fe cation binding site. Histidine 272 serves as a coordination point for Fe cation. The chain crosses the membrane as a helical span at residues 274–288 (FLAAWPVIGIWFTAL). Residues histidine 332, glutamate 333, aspartate 342, and alanine 344 each contribute to the [CaMn4O5] cluster site. Positions 345–360 (AGEVAPVALTAPAING) are excised as a propeptide.

Belongs to the reaction center PufL/M/PsbA/D family. PSII is composed of 1 copy each of membrane proteins PsbA, PsbB, PsbC, PsbD, PsbE, PsbF, PsbH, PsbI, PsbJ, PsbK, PsbL, PsbM, PsbT, PsbX, PsbY, PsbZ, Psb30/Ycf12, peripheral proteins PsbO, CyanoQ (PsbQ), PsbU, PsbV and a large number of cofactors. It forms dimeric complexes. The cofactor is The D1/D2 heterodimer binds P680, chlorophylls that are the primary electron donor of PSII, and subsequent electron acceptors. It shares a non-heme iron and each subunit binds pheophytin, quinone, additional chlorophylls, carotenoids and lipids. D1 provides most of the ligands for the Mn4-Ca-O5 cluster of the oxygen-evolving complex (OEC). There is also a Cl(-1) ion associated with D1 and D2, which is required for oxygen evolution. The PSII complex binds additional chlorophylls, carotenoids and specific lipids.. Tyr-161 forms a radical intermediate that is referred to as redox-active TyrZ, YZ or Y-Z. Post-translationally, C-terminally processed by CtpA; processing is essential to allow assembly of the oxygen-evolving complex and thus photosynthetic growth.

The protein localises to the cellular thylakoid membrane. It carries out the reaction 2 a plastoquinone + 4 hnu + 2 H2O = 2 a plastoquinol + O2. Photosystem II (PSII) is a light-driven water:plastoquinone oxidoreductase that uses light energy to abstract electrons from H(2)O, generating O(2) and a proton gradient subsequently used for ATP formation. It consists of a core antenna complex that captures photons, and an electron transfer chain that converts photonic excitation into a charge separation. The D1/D2 (PsbA/PsbD) reaction center heterodimer binds P680, the primary electron donor of PSII as well as several subsequent electron acceptors. In Trichormus variabilis (strain ATCC 29413 / PCC 7937) (Anabaena variabilis), this protein is Photosystem II protein D1 2.